A 431-amino-acid chain; its full sequence is Glutamate-1-semialdehyde 2,1-aminomutase 1 (431 aa).

Lys268 is subject to N6-(pyridoxal phosphate)lysine.

It belongs to the class-III pyridoxal-phosphate-dependent aminotransferase family. HemL subfamily. In terms of assembly, homodimer. Pyridoxal 5'-phosphate is required as a cofactor.

The protein localises to the cytoplasm. It catalyses the reaction (S)-4-amino-5-oxopentanoate = 5-aminolevulinate. It functions in the pathway porphyrin-containing compound metabolism; protoporphyrin-IX biosynthesis; 5-aminolevulinate from L-glutamyl-tRNA(Glu): step 2/2. In Anoxybacillus flavithermus (strain DSM 21510 / WK1), this protein is Glutamate-1-semialdehyde 2,1-aminomutase 1.